A 284-amino-acid chain; its full sequence is Tropomyosin (284 aa).

Residues 1-284 (MDAIKKKMLM…DQALNELHNM (284 aa)) are a coiled coil. Disordered stretches follow at residues 106–134 (LNST…ENRQ) and 186–221 (AETK…EEAY). Composition is skewed to basic and acidic residues over residues 112–134 (KLTD…ENRQ) and 186–198 (AETK…DELK).

This sequence belongs to the tropomyosin family. Homodimer.

Its function is as follows. Tropomyosin, in association with the troponin complex, plays a central role in the calcium dependent regulation of muscle contraction. In Branchiostoma belcheri (Amphioxus), this protein is Tropomyosin (TPM).